The chain runs to 556 residues: Formate--tetrahydrofolate ligase (556 aa).

Residue 65–72 (TPAGEGKS) coordinates ATP.

The protein belongs to the formate--tetrahydrofolate ligase family.

The enzyme catalyses (6S)-5,6,7,8-tetrahydrofolate + formate + ATP = (6R)-10-formyltetrahydrofolate + ADP + phosphate. The protein operates within one-carbon metabolism; tetrahydrofolate interconversion. The polypeptide is Formate--tetrahydrofolate ligase (Streptococcus thermophilus (strain CNRZ 1066)).